Reading from the N-terminus, the 117-residue chain is Large ribosomal subunit protein uL18 (117 aa).

It belongs to the universal ribosomal protein uL18 family. Part of the 50S ribosomal subunit; part of the 5S rRNA/L5/L18/L25 subcomplex. Contacts the 5S and 23S rRNAs.

Functionally, this is one of the proteins that bind and probably mediate the attachment of the 5S RNA into the large ribosomal subunit, where it forms part of the central protuberance. The sequence is that of Large ribosomal subunit protein uL18 from Klebsiella pneumoniae subsp. pneumoniae (strain ATCC 700721 / MGH 78578).